Here is a 103-residue protein sequence, read N- to C-terminus: Large ribosomal subunit protein bL21 (103 aa).

This sequence belongs to the bacterial ribosomal protein bL21 family. As to quaternary structure, part of the 50S ribosomal subunit. Contacts protein L20.

Functionally, this protein binds to 23S rRNA in the presence of protein L20. The sequence is that of Large ribosomal subunit protein bL21 from Psychromonas ingrahamii (strain DSM 17664 / CCUG 51855 / 37).